We begin with the raw amino-acid sequence, 35 residues long: Jingzhaotoxin F5-21.66 (35 aa).

Disulfide bonds link cysteine 2/cysteine 16, cysteine 9/cysteine 21, and cysteine 15/cysteine 29.

Belongs to the neurotoxin 10 (Hwtx-1) family. 48 (Jztx-F5) subfamily. As to expression, expressed by the venom gland.

The protein localises to the secreted. Its function is as follows. Probable ion channel inhibitor. This Chilobrachys guangxiensis (Chinese earth tiger tarantula) protein is Jingzhaotoxin F5-21.66.